The following is a 229-amino-acid chain: MDENSVTFKGTVNGLTIILKNEPEFSEIIQCMRDKVNSAGKFFRGAKLAVKYKGRILNEEERSQLLEILVRESGARIEAFEEDKEQVQNVANNVSSDKPVERKNQIKKYMFFKGIEEGQTKFYRGTVRSGQLVNFDGNLVILGDVNPGAVIEATGNIVVMGLLRGVVHAGSDGNKEAIVVALGLNPTQLRIADIITRPPDEKGVVGNPIPELAYVKDDILYVERFLPTR.

The protein belongs to the MinC family. As to quaternary structure, interacts with MinD and FtsZ.

Its function is as follows. Cell division inhibitor that blocks the formation of polar Z ring septums. Rapidly oscillates between the poles of the cell to destabilize FtsZ filaments that have formed before they mature into polar Z rings. Prevents FtsZ polymerization. The sequence is that of Probable septum site-determining protein MinC from Ruminiclostridium cellulolyticum (strain ATCC 35319 / DSM 5812 / JCM 6584 / H10) (Clostridium cellulolyticum).